A 239-amino-acid chain; its full sequence is Guanylate kinase (239 aa).

The Guanylate kinase-like domain maps to 19–197; it reads GLLIVVTGAS…AVSELLAVQQ (179 aa). 26-33 provides a ligand contact to ATP; that stretch reads GASGVGKG.

The protein belongs to the guanylate kinase family.

The protein localises to the cytoplasm. The enzyme catalyses GMP + ATP = GDP + ADP. Essential for recycling GMP and indirectly, cGMP. The polypeptide is Guanylate kinase (gmk) (Deinococcus radiodurans (strain ATCC 13939 / DSM 20539 / JCM 16871 / CCUG 27074 / LMG 4051 / NBRC 15346 / NCIMB 9279 / VKM B-1422 / R1)).